We begin with the raw amino-acid sequence, 493 residues long: Dipeptide and tripeptide permease B (493 aa).

Topologically, residues 1 to 27 (MERSTPTGLLQQPKPFFMIFFVELWER) are cytoplasmic. A helical membrane pass occupies residues 28–48 (FGYYGVQGILAVFFVQQLGFS). Residues 49–52 (QEQA) are Periplasmic-facing. A helical membrane pass occupies residues 53 to 73 (FVTFGAFAALVYGLISIGGYV). The Cytoplasmic segment spans residues 74 to 82 (GDHLLGTKR). Residues 83–103 (TMVLGAVVLAAGYFATGLSLY) form a helical membrane-spanning segment. Residues 104-106 (QPN) are Periplasmic-facing. Residues 107–127 (LIFFALGTIAVGNGLFKANPA) traverse the membrane as a helical segment. Residues 128-146 (SLLSKCYPPKDPRLDGAFT) are Cytoplasmic-facing. The chain crosses the membrane as a helical span at residues 147 to 167 (LFYMSINIGSLLSLSLAPVIA). Residues 168–169 (ER) are Periplasmic-facing. Residues 170 to 190 (FGYTVTYYLCGIGLIFALLVY) traverse the membrane as a helical segment. The Cytoplasmic portion of the chain corresponds to 191 to 212 (FCCRHMVRHIGSEPDTKPLNWR). A run of 2 helical transmembrane segments spans residues 213-233 (NLLL…WLMN) and 234-254 (HVFI…FIFF). Over 255-267 (REASKQDRLGRNK) the chain is Cytoplasmic. The helical transmembrane segment at 268 to 288 (MFVAFILMIEAIVFYVLYAQM) threads the bilayer. Residues 289-311 (PTSLNFFAINNVHHEILGFSINP) lie on the Periplasmic side of the membrane. Residues 312-332 (VSFQALNPFWVVVASPILASI) traverse the membrane as a helical segment. The Cytoplasmic portion of the chain corresponds to 333-350 (YTRLGSQNRDLSMPAKFT). A helical transmembrane segment spans residues 351-371 (LGMFLCSLGFLTAAAAGMWFA). At 372–379 (DAQGLTSP) the chain is on the periplasmic side. A helical transmembrane segment spans residues 380 to 400 (WFIVLVYLFQSLGELMISALG). The Cytoplasmic portion of the chain corresponds to 401–424 (LAMVAALVPQYLMGFILGMWFLTQ). A helical transmembrane segment spans residues 425 to 445 (AASFLIGGYVATFTATPEGMT). The Periplasmic portion of the chain corresponds to 446–456 (DPLETLPIYTD). The helical transmembrane segment at 457–477 (VFGKIGMVTLVIALVMALLIP) threads the bilayer. Over 478–493 (WLNRMINSSAAEDAVA) the chain is Cytoplasmic.

It belongs to the major facilitator superfamily. Proton-dependent oligopeptide transporter (POT/PTR) (TC 2.A.17) family. DtpB subfamily.

It is found in the cell inner membrane. Proton-dependent permease that transports di- and tripeptides. In Yersinia enterocolitica serotype O:8 / biotype 1B (strain NCTC 13174 / 8081), this protein is Dipeptide and tripeptide permease B.